Reading from the N-terminus, the 153-residue chain is uncharacterized protein (153 aa).

An N-terminal signal peptide occupies residues 1–22 (MKAFNKLFSLVVASVLVFSLAG). The N-palmitoyl cysteine moiety is linked to residue Cys23. The S-diacylglycerol cysteine moiety is linked to residue Cys23.

The protein to L.monocytogenes lmo0207.

The protein resides in the cell membrane. This is an uncharacterized protein from Escherichia coli (strain K12).